Reading from the N-terminus, the 452-residue chain is MMITLRKLPLAVAVAAGVMSAQAMAVDFHGYARSGIGWTGSGGEQQCFQATGAQSKYRLGNECETYAELKLGQEVWKEGDKSFYFDTNVAYSVNQQNDWESTDPAFREANVQGKNLIEWLPGSTIWAGKRFYQRHDVHMIDFYYWDISGPGAGIENIDLGFGKLSLAATRSTEAGGSYTFSSQNIYDEVKDTANDVFDVRLAGLQTNPDGVLELGVDYGRANTTDGYKLADGASKDGWMFTAEHTQSMLKGYNKFVVQYATDAMTTQGKGQARGSDGSSSFTEELPDGTKINYANKVINNNGNMWRILDHGAISLGDKWDLMYVGMYQNIDWDNNLGTEWWTVGVRPMYKWTPIMSTLLEVGYDNVKSQQTGDRNNQYKITLAQQWQAGDSIWSRPAIRIFATYAKWDEKWGYIKDGDNISRYAAATNSGISTNSRGDSDEWTFGAQMEIWW.

The N-terminal stretch at 1 to 25 is a signal peptide; that stretch reads MMITLRKLPLAVAVAAGVMSAQAMA.

It belongs to the porin LamB (TC 1.B.3) family. As to quaternary structure, homotrimer formed of three 18-stranded antiparallel beta-barrels, containing three independent channels.

The protein resides in the cell outer membrane. The enzyme catalyses beta-maltose(in) = beta-maltose(out). In terms of biological role, involved in the transport of maltose and maltodextrins. In Salmonella agona (strain SL483), this protein is Maltoporin.